The following is a 142-amino-acid chain: Galactose-6-phosphate isomerase subunit LacA (142 aa).

This sequence belongs to the LacAB/RpiB family. In terms of assembly, heteromultimeric protein consisting of LacA and LacB.

It carries out the reaction aldehydo-D-galactose 6-phosphate = keto-D-tagatose 6-phosphate. It participates in carbohydrate metabolism; D-galactose 6-phosphate degradation; D-tagatose 6-phosphate from D-galactose 6-phosphate: step 1/1. In Enterococcus faecalis (strain ATCC 700802 / V583), this protein is Galactose-6-phosphate isomerase subunit LacA.